Here is a 304-residue protein sequence, read N- to C-terminus: tRNA pseudouridine synthase B (304 aa).

Catalysis depends on Asp48, which acts as the Nucleophile.

Belongs to the pseudouridine synthase TruB family. Type 1 subfamily.

The enzyme catalyses uridine(55) in tRNA = pseudouridine(55) in tRNA. In terms of biological role, responsible for synthesis of pseudouridine from uracil-55 in the psi GC loop of transfer RNAs. The sequence is that of tRNA pseudouridine synthase B from Pseudomonas paraeruginosa (strain DSM 24068 / PA7) (Pseudomonas aeruginosa (strain PA7)).